The following is an 85-amino-acid chain: MAHKKAGGSTRNGRDSESKRLGVKRFGGQVVIPGNILVRQRGTQFHPGVGVQIGKDHTLFAVVEGQVKFEVKGKLKRRTVSVVAA.

Residues 1-22 form a disordered region; the sequence is MAHKKAGGSTRNGRDSESKRLG.

It belongs to the bacterial ribosomal protein bL27 family.

This is Large ribosomal subunit protein bL27 from Marinomonas sp. (strain MWYL1).